Reading from the N-terminus, the 678-residue chain is DNA ligase (678 aa).

NAD(+) is bound by residues 36-40 (DSEFD), 85-86 (SL), and Glu-117. Residue Lys-119 is the N6-AMP-lysine intermediate of the active site. NAD(+) is bound by residues Arg-140, Glu-177, Lys-294, and Lys-318. 4 residues coordinate Zn(2+): Cys-412, Cys-415, Cys-430, and Cys-436. A BRCT domain is found at 595-678 (IIDAPLLGKT…TWWQHYGNAV (84 aa)).

The protein belongs to the NAD-dependent DNA ligase family. LigA subfamily. It depends on Mg(2+) as a cofactor. Requires Mn(2+) as cofactor.

It catalyses the reaction NAD(+) + (deoxyribonucleotide)n-3'-hydroxyl + 5'-phospho-(deoxyribonucleotide)m = (deoxyribonucleotide)n+m + AMP + beta-nicotinamide D-nucleotide.. Its function is as follows. DNA ligase that catalyzes the formation of phosphodiester linkages between 5'-phosphoryl and 3'-hydroxyl groups in double-stranded DNA using NAD as a coenzyme and as the energy source for the reaction. It is essential for DNA replication and repair of damaged DNA. This Dichelobacter nodosus (strain VCS1703A) protein is DNA ligase.